The primary structure comprises 399 residues: 4-hydroxy-3-methylbut-2-enyl diphosphate reductase (399 aa).

Residue Cys66 coordinates [4Fe-4S] cluster. His96 contributes to the (2E)-4-hydroxy-3-methylbut-2-enyl diphosphate binding site. A dimethylallyl diphosphate-binding site is contributed by His96. His96 lines the isopentenyl diphosphate pocket. Cys157 serves as a coordination point for [4Fe-4S] cluster. His185 lines the (2E)-4-hydroxy-3-methylbut-2-enyl diphosphate pocket. His185 contributes to the dimethylallyl diphosphate binding site. His185 lines the isopentenyl diphosphate pocket. Glu187 functions as the Proton donor in the catalytic mechanism. Thr250 contributes to the (2E)-4-hydroxy-3-methylbut-2-enyl diphosphate binding site. Residue Cys288 participates in [4Fe-4S] cluster binding. Positions 317, 318, 319, and 380 each coordinate (2E)-4-hydroxy-3-methylbut-2-enyl diphosphate. Dimethylallyl diphosphate-binding residues include Ser317, Ser318, Asn319, and Ser380. Ser317, Ser318, Asn319, and Ser380 together coordinate isopentenyl diphosphate.

Belongs to the IspH family. [4Fe-4S] cluster serves as cofactor.

The enzyme catalyses isopentenyl diphosphate + 2 oxidized [2Fe-2S]-[ferredoxin] + H2O = (2E)-4-hydroxy-3-methylbut-2-enyl diphosphate + 2 reduced [2Fe-2S]-[ferredoxin] + 2 H(+). It catalyses the reaction dimethylallyl diphosphate + 2 oxidized [2Fe-2S]-[ferredoxin] + H2O = (2E)-4-hydroxy-3-methylbut-2-enyl diphosphate + 2 reduced [2Fe-2S]-[ferredoxin] + 2 H(+). It functions in the pathway isoprenoid biosynthesis; dimethylallyl diphosphate biosynthesis; dimethylallyl diphosphate from (2E)-4-hydroxy-3-methylbutenyl diphosphate: step 1/1. It participates in isoprenoid biosynthesis; isopentenyl diphosphate biosynthesis via DXP pathway; isopentenyl diphosphate from 1-deoxy-D-xylulose 5-phosphate: step 6/6. Its function is as follows. Catalyzes the conversion of 1-hydroxy-2-methyl-2-(E)-butenyl 4-diphosphate (HMBPP) into a mixture of isopentenyl diphosphate (IPP) and dimethylallyl diphosphate (DMAPP). Acts in the terminal step of the DOXP/MEP pathway for isoprenoid precursor biosynthesis. This is 4-hydroxy-3-methylbut-2-enyl diphosphate reductase from Parasynechococcus marenigrum (strain WH8102).